A 417-amino-acid chain; its full sequence is Voltage-gated ClC-type chloride channel ClcB (417 aa).

10 helical membrane passes run 5–25, 54–74, 146–166, 168–188, 222–242, 258–278, 288–308, 316–336, 349–371, and 380–400; these read LLIATLIGILAALAVAAFRHA, LITPALGGLAAGLLLWGWQKM, LWIASGAAAGMAGAYHAPLAG, LFIAEILFGTLMLASLGPVVV, VMIVSTGLVAGLCGPLLMWLM, WQLALGGLIVGLLSLLTPTVW, FLLSPPLFSLIGGIFACKILA, GAPGGVFTPTLFVGLSIGMFL, EIAILLGLAGMATLLAATTHAPI, and MTGEYQLLPGLLIACVVASVL.

The protein belongs to the chloride channel (TC 2.A.49) family. ClcB subfamily.

It is found in the cell inner membrane. Its function is as follows. Probably acts as an electrical shunt for an outwardly-directed proton pump that is linked to amino acid decarboxylation, as part of the extreme acid resistance (XAR) response. The polypeptide is Voltage-gated ClC-type chloride channel ClcB (Salmonella dublin (strain CT_02021853)).